Consider the following 480-residue polypeptide: O-acyltransferase ausP (480 aa).

Catalysis depends on proton acceptor residues His-180 and Asp-412.

Belongs to the plant acyltransferase family. Monomer.

It functions in the pathway secondary metabolite biosynthesis; terpenoid biosynthesis. Its function is as follows. O-acyltransferase; part of the gene cluster that mediates the biosynthesis of calidodehydroaustin, a fungal meroterpenoid. The first step of the pathway is the synthesis of 3,5-dimethylorsellinic acid by the polyketide synthase ausA. 3,5-dimethylorsellinic acid is then prenylated by the polyprenyl transferase ausN. Further epoxidation by the FAD-dependent monooxygenase ausM and cyclization by the probable terpene cyclase ausL lead to the formation of protoaustinoid A. Protoaustinoid A is then oxidized to spiro-lactone preaustinoid A3 by the combined action of the FAD-binding monooxygenases ausB and ausC, and the dioxygenase ausE. Acid-catalyzed keto-rearrangement and ring contraction of the tetraketide portion of preaustinoid A3 by ausJ lead to the formation of preaustinoid A4. The aldo-keto reductase ausK, with the help of ausH, is involved in the next step by transforming preaustinoid A4 into isoaustinone which is in turn hydroxylated by the P450 monooxygenase ausI to form austinolide. The cytochrome P450 monooxygenase ausG modifies austinolide to austinol. Austinol is further acetylated to austin by the O-acetyltransferase ausP, which spontaneously changes to dehydroaustin. The cytochrome P450 monooxygenase ausR then converts dehydroaustin is into 7-dehydrodehydroaustin. The hydroxylation catalyzed by ausR permits the O-acetyltransferase ausQ to add an additional acetyl group to the molecule, leading to the formation of acetoxydehydroaustin. The short chain dehydrogenase ausT catalyzes the reduction of the double bond present between carbon atoms 1 and 2 to convert 7-dehydrodehydroaustin into 1,2-dihydro-7-hydroxydehydroaustin. AusQ catalyzes not only an acetylation reaction but also the addition of the PKS ausV diketide product to 1,2-dihydro-7-hydroxydehydroaustin, forming precalidodehydroaustin. Finally, the iron/alpha-ketoglutarate-dependent dioxygenase converts precalidodehydroaustin into calidodehydroaustin. The sequence is that of O-acyltransferase ausP from Aspergillus calidoustus.